The following is a 568-amino-acid chain: Urease subunit alpha (568 aa).

Residues Gly-131–Tyr-568 form the Urease domain. Residues His-136, His-138, and Lys-219 each coordinate Ni(2+). N6-carboxylysine is present on Lys-219. His-221 provides a ligand contact to substrate. The Ni(2+) site is built by His-248 and His-274. His-322 (proton donor) is an active-site residue. A Ni(2+)-binding site is contributed by Asp-362.

This sequence belongs to the metallo-dependent hydrolases superfamily. Urease alpha subunit family. Heterotrimer of UreA (gamma), UreB (beta) and UreC (alpha) subunits. Three heterotrimers associate to form the active enzyme. Requires Ni cation as cofactor. Carboxylation allows a single lysine to coordinate two nickel ions.

Its subcellular location is the cytoplasm. The catalysed reaction is urea + 2 H2O + H(+) = hydrogencarbonate + 2 NH4(+). Its pathway is nitrogen metabolism; urea degradation; CO(2) and NH(3) from urea (urease route): step 1/1. The protein is Urease subunit alpha of Cereibacter sphaeroides (strain KD131 / KCTC 12085) (Rhodobacter sphaeroides).